A 37-amino-acid polypeptide reads, in one-letter code: Cytochrome b6-f complex subunit 7 (37 aa).

A helical membrane pass occupies residues 11 to 29 (AVLLMVLVLVGLAWGFLLL).

This sequence belongs to the PetM family. In terms of assembly, the 4 large subunits of the cytochrome b6-f complex are cytochrome b6, subunit IV (17 kDa polypeptide, PetD), cytochrome f and the Rieske protein, while the 4 small subunits are PetG, PetL, PetM and PetN. The complex functions as a dimer.

The protein localises to the cellular thylakoid membrane. Its function is as follows. Component of the cytochrome b6-f complex, which mediates electron transfer between photosystem II (PSII) and photosystem I (PSI), cyclic electron flow around PSI, and state transitions. In Rippkaea orientalis (strain PCC 8801 / RF-1) (Cyanothece sp. (strain PCC 8801)), this protein is Cytochrome b6-f complex subunit 7.